Here is a 159-residue protein sequence, read N- to C-terminus: NADH-quinone oxidoreductase subunit B (159 aa).

[4Fe-4S] cluster contacts are provided by Cys-37, Cys-38, Cys-102, and Cys-132.

It belongs to the complex I 20 kDa subunit family. As to quaternary structure, NDH-1 is composed of 14 different subunits. Subunits NuoB, C, D, E, F, and G constitute the peripheral sector of the complex. [4Fe-4S] cluster serves as cofactor.

It is found in the cell inner membrane. It catalyses the reaction a quinone + NADH + 5 H(+)(in) = a quinol + NAD(+) + 4 H(+)(out). In terms of biological role, NDH-1 shuttles electrons from NADH, via FMN and iron-sulfur (Fe-S) centers, to quinones in the respiratory chain. Couples the redox reaction to proton translocation (for every two electrons transferred, four hydrogen ions are translocated across the cytoplasmic membrane), and thus conserves the redox energy in a proton gradient. In Vesicomyosocius okutanii subsp. Calyptogena okutanii (strain HA), this protein is NADH-quinone oxidoreductase subunit B.